The chain runs to 369 residues: Flagellar P-ring protein (369 aa).

The first 24 residues, 1–24 (MKTLHRCIGVALLALGALAGTAHA), serve as a signal peptide directing secretion.

The protein belongs to the FlgI family. The basal body constitutes a major portion of the flagellar organelle and consists of four rings (L,P,S, and M) mounted on a central rod.

It localises to the periplasm. It is found in the bacterial flagellum basal body. Its function is as follows. Assembles around the rod to form the L-ring and probably protects the motor/basal body from shearing forces during rotation. The chain is Flagellar P-ring protein from Ralstonia nicotianae (strain ATCC BAA-1114 / GMI1000) (Ralstonia solanacearum).